The following is a 95-amino-acid chain: Co-chaperonin GroES (95 aa).

The protein belongs to the GroES chaperonin family. Heptamer of 7 subunits arranged in a ring. Interacts with the chaperonin GroEL.

It localises to the cytoplasm. Together with the chaperonin GroEL, plays an essential role in assisting protein folding. The GroEL-GroES system forms a nano-cage that allows encapsulation of the non-native substrate proteins and provides a physical environment optimized to promote and accelerate protein folding. GroES binds to the apical surface of the GroEL ring, thereby capping the opening of the GroEL channel. This Rickettsia akari (strain Hartford) protein is Co-chaperonin GroES.